Reading from the N-terminus, the 704-residue chain is Elongation factor G (704 aa).

Residues 8-290 enclose the tr-type G domain; that stretch reads ARYRNIGISA…AVIDYLPSPV (283 aa). GTP is bound by residues 17–24, 88–92, and 142–145; these read AHIDAGKT, DTPGH, and NKMD. N6-acetyllysine is present on residues Lys-504 and Lys-643.

This sequence belongs to the TRAFAC class translation factor GTPase superfamily. Classic translation factor GTPase family. EF-G/EF-2 subfamily.

Its subcellular location is the cytoplasm. Its function is as follows. Catalyzes the GTP-dependent ribosomal translocation step during translation elongation. During this step, the ribosome changes from the pre-translocational (PRE) to the post-translocational (POST) state as the newly formed A-site-bound peptidyl-tRNA and P-site-bound deacylated tRNA move to the P and E sites, respectively. Catalyzes the coordinated movement of the two tRNA molecules, the mRNA and conformational changes in the ribosome. The sequence is that of Elongation factor G from Escherichia coli O17:K52:H18 (strain UMN026 / ExPEC).